A 92-amino-acid chain; its full sequence is Small ribosomal subunit protein uS15c (92 aa).

It belongs to the universal ribosomal protein uS15 family. As to quaternary structure, part of the 30S ribosomal subunit.

It localises to the plastid. The protein localises to the chloroplast. This is Small ribosomal subunit protein uS15c (rps15) from Guizotia abyssinica (Niger).